Here is a 246-residue protein sequence, read N- to C-terminus: Small ribosomal subunit protein uS2 (246 aa).

The disordered stretch occupies residues 224-246 (AKQGEEEAEAAEETAPETETTTA). Over residues 229-239 (EEAEAAEETAP) the composition is skewed to acidic residues.

Belongs to the universal ribosomal protein uS2 family.

The protein is Small ribosomal subunit protein uS2 of Bacillus velezensis (strain DSM 23117 / BGSC 10A6 / LMG 26770 / FZB42) (Bacillus amyloliquefaciens subsp. plantarum).